We begin with the raw amino-acid sequence, 30 residues long: Cyclotide hyen-D (30 aa).

A cross-link (cyclopeptide (Gly-Asn)) is located at residues 1-30; that stretch reads GFPCGESCVYIPCFTAAIGCSCKSKVCYKN. Intrachain disulfides connect C4/C20, C8/C22, and C13/C27.

In terms of processing, this is a cyclic peptide. In terms of tissue distribution, detected in stems (at protein level).

In terms of biological role, probably participates in a plant defense mechanism. Has strong cytotoxic activity against HUVEC cells (LC(50)= 0.58 uM) and various cancer cells including HeLa (LC(50)= 0.48 uM), MCF-7 and K562. Also displays some hemolytic activity. Binds to and induces leakage in phospholipd membranes, particularly ones containing 1-palmitoyl-2-oleophosphatidylethanolamine (POPE). This Pigea enneasperma (Spade flower) protein is Cyclotide hyen-D.